Consider the following 657-residue polypeptide: Translation factor GUF1, mitochondrial (657 aa).

The transit peptide at 1–39 directs the protein to the mitochondrion; the sequence is MRGCLQSVKWLTSALRPSQSLASSTRYPRRLLSTSAPRN. The region spanning 59-239 is the tr-type G domain; it reads ERFRNFCIVA…TVIEQIPAPV (181 aa). Residues 121-128, 185-189, and 239-242 contribute to the GTP site; these read HQGEDYLL, INKVD, and VGDR.

This sequence belongs to the TRAFAC class translation factor GTPase superfamily. Classic translation factor GTPase family. LepA subfamily.

The protein localises to the mitochondrion inner membrane. It catalyses the reaction GTP + H2O = GDP + phosphate + H(+). Its function is as follows. Promotes mitochondrial protein synthesis. May act as a fidelity factor of the translation reaction, by catalyzing a one-codon backward translocation of tRNAs on improperly translocated ribosomes. Binds to mitochondrial ribosomes in a GTP-dependent manner. The protein is Translation factor GUF1, mitochondrial of Ajellomyces capsulatus (strain H143) (Darling's disease fungus).